The following is a 181-amino-acid chain: Bifunctional protein PyrR (181 aa).

The PRPP-binding motif lies at 100–112 (VVLVDDVIYTGRT).

Belongs to the purine/pyrimidine phosphoribosyltransferase family. PyrR subfamily. As to quaternary structure, homodimer and homohexamer; in equilibrium.

The enzyme catalyses UMP + diphosphate = 5-phospho-alpha-D-ribose 1-diphosphate + uracil. Its function is as follows. Regulates transcriptional attenuation of the pyrimidine nucleotide (pyr) operon by binding in a uridine-dependent manner to specific sites on pyr mRNA. This disrupts an antiterminator hairpin in the RNA and favors formation of a downstream transcription terminator, leading to a reduced expression of downstream genes. In terms of biological role, also displays a weak uracil phosphoribosyltransferase activity which is not physiologically significant. The polypeptide is Bifunctional protein PyrR (Pelotomaculum thermopropionicum (strain DSM 13744 / JCM 10971 / SI)).